The following is a 605-amino-acid chain: Elongation factor 4 (605 aa).

The tr-type G domain maps to 8-190 (RRVRNFCIVA…AIITRIPPPQ (183 aa)). GTP contacts are provided by residues 20 to 25 (DHGKST) and 137 to 140 (NKID).

The protein belongs to the TRAFAC class translation factor GTPase superfamily. Classic translation factor GTPase family. LepA subfamily.

It is found in the cell inner membrane. The catalysed reaction is GTP + H2O = GDP + phosphate + H(+). In terms of biological role, required for accurate and efficient protein synthesis under certain stress conditions. May act as a fidelity factor of the translation reaction, by catalyzing a one-codon backward translocation of tRNAs on improperly translocated ribosomes. Back-translocation proceeds from a post-translocation (POST) complex to a pre-translocation (PRE) complex, thus giving elongation factor G a second chance to translocate the tRNAs correctly. Binds to ribosomes in a GTP-dependent manner. This Treponema pallidum (strain Nichols) protein is Elongation factor 4.